A 1140-amino-acid chain; its full sequence is Protein shank (1140 aa).

6 ANK repeats span residues 144-174 (QGET…HVDF), 178-207 (EGQT…SPNY), 211-242 (IGLT…DIGV), 246-275 (HGNH…QIDA), 279-309 (NGNS…HLAV), and 312-341 (QGQT…KSSV). The tract at residues 337–412 (PKSSVPYRGT…ITPSEYGTMR (76 aa)) is disordered. The span at 351–364 (TRRRLSSTITRRRS) shows a compositional bias: basic residues. Over residues 388 to 412 (SAAPSPSPSRSSRTTITPSEYGTMR) the composition is skewed to low complexity. One can recognise a PDZ domain in the interval 436-529 (ILVIPRGVKG…TITLKVITVD (94 aa)). Composition is skewed to polar residues over residues 640-657 (DQES…NSVS) and 687-704 (TSTF…QLSR). Disordered stretches follow at residues 640-673 (DQES…ASSA), 687-856 (TSTF…AASA), 875-902 (QLKK…STTD), 961-993 (KDSG…HSPN), and 1008-1028 (YGQK…SSTV). Low complexity-rich tracts occupy residues 761-775 (QHQN…QQHP) and 784-793 (PQPIQQQQSS). Composition is skewed to pro residues over residues 794–806 (IPPP…PPHC) and 823–847 (VPPP…PPPG). Polar residues predominate over residues 964 to 974 (GYTSSRTSLEP). Positions 977–988 (SEEKDHRPHFSL) are enriched in basic and acidic residues. Positions 1015-1028 (SVASSSTASSSSTV) are enriched in low complexity. The 63-residue stretch at 1078 to 1140 (WSVDDVIGWL…IESALRGLLQ (63 aa)) folds into the SAM domain.

This sequence belongs to the SHANK family. In terms of assembly, interacts (via PDZ domain) with egl-19 (via C-terminus). In terms of tissue distribution, expressed in the pharynx, pharyngeal-intestinal valve, intestine, rectal epithelial cells, tail neurons, nerve cord and sperm.

The protein resides in the cell projection. Its subcellular location is the pseudopodium. It is found in the cytoplasmic vesicle. The protein localises to the postsynaptic density. Scaffold protein that most likely acts in the postsynaptic density (PSD) of excitatory synapses which orchestrates synapse formation and maintenance at neuromuscular junctions. Associates with and trafficks the L-type calcium channel egl-19 to the cell surface of body wall muscles to ensure the function of the calcium channel and therefore maintain the Ca(2+) current density. The maintenance of Ca(2+) also allows for the downstream regulation of Ca(2+)-induced expression of genes such as gem-4. Plays a role in the regulation of the defecation cycle, and this may be in association with the inositol trisphosphate (IP3) receptor itr-1, which in turn mediates periodic calcium release and muscle contractions. Required for normal fertility and pharyngeal pumping. The sequence is that of Protein shank from Caenorhabditis elegans.